The sequence spans 292 residues: Non-homologous end joining protein Ku (292 aa).

Residues 9–187 (ITFGLVNVPV…TVPPITEREL (179 aa)) form the Ku domain. A compositionally biased stretch (low complexity) spans 264-285 (AASAFPAAEKAPAGKNAATASA). The tract at residues 264–292 (AASAFPAAEKAPAGKNAATASAKKARKLA) is disordered.

It belongs to the prokaryotic Ku family. Homodimer. Interacts with LigD.

Its function is as follows. With LigD forms a non-homologous end joining (NHEJ) DNA repair enzyme, which repairs dsDNA breaks with reduced fidelity. Binds linear dsDNA with 5'- and 3'- overhangs but not closed circular dsDNA nor ssDNA. Recruits and stimulates the ligase activity of LigD. This Leifsonia xyli subsp. xyli (strain CTCB07) protein is Non-homologous end joining protein Ku.